The chain runs to 296 residues: NADH-cytochrome b5 reductase 2 (296 aa).

The chain crosses the membrane as a helical span at residues 2 to 24; that stretch reads LVALAAIGVTVLLFLIKALGSGA. In terms of domain architecture, FAD-binding FR-type spans 35-147; sequence NAKYPLPLIE…RGPNGLLVYK (113 aa). FAD is bound by residues 127–142 and 166–201; these read DSLKIGETIDFRGPNG and VAKHVGMLAGGTGITPMLQLIRQITQDPNDNTKCYL.

It belongs to the flavoprotein pyridine nucleotide cytochrome reductase family. FAD serves as cofactor.

It is found in the membrane. It catalyses the reaction 2 Fe(III)-[cytochrome b5] + NADH = 2 Fe(II)-[cytochrome b5] + NAD(+) + H(+). Functionally, NADH-cytochrome b5 reductases are involved in desaturation and elongation of fatty acids, cholesterol biosynthesis and drug metabolism. The protein is NADH-cytochrome b5 reductase 2 (cyb5r2) of Xenopus laevis (African clawed frog).